The sequence spans 480 residues: NADH-quinone oxidoreductase subunit N (480 aa).

A run of 14 helical transmembrane segments spans residues 12-32, 41-61, 80-100, 105-125, 130-150, 165-185, 204-224, 237-257, 275-295, 300-320, 326-346, 372-392, 406-428, and 450-470; these read LLIPELVLAGGAMALLMLGVF, LVQWLTVGLLAAAALAALFLV, FSKTAIGLVAAIAMLLAMPYL, LGKIEYPVLVVLAVTGMMMMV, LIAMYMGIELQSLALYVLAAF, FVLGALSSGLLLYGASLVYGF, IGLTVGLVFVICGLAFKVSAA, APTPVTAFFATAPKFAAIVLL, VIWMIAVLSMAVGAFGALTQQ, LMAYSSISNMGYALVAVAAAS, ALLVFMVLYMVGAIGSFATIL, GWSMTALMFSIGGLPFMVGFF, LMILAVLAVLFSVVGAAYYLRIV, and IARIAGLATVLLLPVLGWLVF.

Belongs to the complex I subunit 2 family. NDH-1 is composed of 14 different subunits. Subunits NuoA, H, J, K, L, M, N constitute the membrane sector of the complex.

It localises to the cell inner membrane. It catalyses the reaction a quinone + NADH + 5 H(+)(in) = a quinol + NAD(+) + 4 H(+)(out). NDH-1 shuttles electrons from NADH, via FMN and iron-sulfur (Fe-S) centers, to quinones in the respiratory chain. The immediate electron acceptor for the enzyme in this species is believed to be ubiquinone. Couples the redox reaction to proton translocation (for every two electrons transferred, four hydrogen ions are translocated across the cytoplasmic membrane), and thus conserves the redox energy in a proton gradient. The polypeptide is NADH-quinone oxidoreductase subunit N (Maricaulis maris (strain MCS10) (Caulobacter maris)).